A 343-amino-acid polypeptide reads, in one-letter code: tRNA N6-adenosine threonylcarbamoyltransferase (343 aa).

Residues His-114 and His-118 each coordinate Fe cation. Substrate is bound by residues 137 to 141, Asp-171, Gly-184, Asp-188, and Asn-278; that span reads LVSGG. Asp-306 serves as a coordination point for Fe cation.

This sequence belongs to the KAE1 / TsaD family. Fe(2+) serves as cofactor.

Its subcellular location is the cytoplasm. The catalysed reaction is L-threonylcarbamoyladenylate + adenosine(37) in tRNA = N(6)-L-threonylcarbamoyladenosine(37) in tRNA + AMP + H(+). Its function is as follows. Required for the formation of a threonylcarbamoyl group on adenosine at position 37 (t(6)A37) in tRNAs that read codons beginning with adenine. Is involved in the transfer of the threonylcarbamoyl moiety of threonylcarbamoyl-AMP (TC-AMP) to the N6 group of A37, together with TsaE and TsaB. TsaD likely plays a direct catalytic role in this reaction. The sequence is that of tRNA N6-adenosine threonylcarbamoyltransferase from Acidothermus cellulolyticus (strain ATCC 43068 / DSM 8971 / 11B).